We begin with the raw amino-acid sequence, 143 residues long: MRVYVLNGPNLGRLGTRQPEVYGTTTYADLVELCQQTGRELGLEVVIRQTDAEQELLGWLHEAADLGACVVLNPAAWSHYSIAVRDACALLRAPLVEVHLSNIHAREEFRHHSVVSAVATGVICGLGVDGYRLALHHLAARAR.

Y22 acts as the Proton acceptor in catalysis. The substrate site is built by N73, H79, and D86. H99 (proton donor) is an active-site residue. Residues 100 to 101 and R110 contribute to the substrate site; that span reads LS.

The protein belongs to the type-II 3-dehydroquinase family. Homododecamer.

The catalysed reaction is 3-dehydroquinate = 3-dehydroshikimate + H2O. The protein operates within metabolic intermediate biosynthesis; chorismate biosynthesis; chorismate from D-erythrose 4-phosphate and phosphoenolpyruvate: step 3/7. In terms of biological role, catalyzes a trans-dehydration via an enolate intermediate. The protein is 3-dehydroquinate dehydratase of Salinispora tropica (strain ATCC BAA-916 / DSM 44818 / JCM 13857 / NBRC 105044 / CNB-440).